A 359-amino-acid polypeptide reads, in one-letter code: Ribosomal RNA large subunit methyltransferase M (359 aa).

Residues serine 186, 219-222 (CPGG), aspartate 238, aspartate 258, and aspartate 275 each bind S-adenosyl-L-methionine. The active-site Proton acceptor is the lysine 304.

Belongs to the class I-like SAM-binding methyltransferase superfamily. RNA methyltransferase RlmE family. RlmM subfamily. As to quaternary structure, monomer.

It localises to the cytoplasm. It carries out the reaction cytidine(2498) in 23S rRNA + S-adenosyl-L-methionine = 2'-O-methylcytidine(2498) in 23S rRNA + S-adenosyl-L-homocysteine + H(+). Its function is as follows. Catalyzes the 2'-O-methylation at nucleotide C2498 in 23S rRNA. This chain is Ribosomal RNA large subunit methyltransferase M, found in Vibrio parahaemolyticus serotype O3:K6 (strain RIMD 2210633).